We begin with the raw amino-acid sequence, 205 residues long: Recombination protein RecR (205 aa).

Residues 60–75 form a C4-type zinc finger; it reads CKVCHNISDTETCQIC. A Toprim domain is found at 83–178; it reads STVCVVENIR…KLSVIARGIS (96 aa).

It belongs to the RecR family.

Its function is as follows. May play a role in DNA repair. It seems to be involved in an RecBC-independent recombinational process of DNA repair. It may act with RecF and RecO. This chain is Recombination protein RecR, found in Bacteroides thetaiotaomicron (strain ATCC 29148 / DSM 2079 / JCM 5827 / CCUG 10774 / NCTC 10582 / VPI-5482 / E50).